The sequence spans 1003 residues: Retinoblastoma-related protein 1 (1003 aa).

The domain A stretch occupies residues 405-607 (TPVSTAMTTA…EKGSSMYNSL (203 aa)). The pocket stretch occupies residues 405–860 (TPVSTAMTTA…NEMFIPSVKP (456 aa)). The segment at 608–729 (AVAKPSLAAE…PGGGGETCAE (122 aa)) is spacer. Positions 730–860 (TAINVFFGKI…NEMFIPSVKP (131 aa)) are domain B. Positions 868–899 (AGNNSEKNDHNDGQGPASPKPSPFPKLPDMSP) are disordered.

Belongs to the retinoblastoma protein (RB) family. As to expression, expressed in roots, stems, leaves and flowers.

It localises to the nucleus. Regulator of biological processes that recruits a histone deacetylase to control gene transcription. Formation of stable complexes with geminiviridae replication-associated proteins may create a cellular environment which favors viral DNA replication. May play a role in the entry into mitosis, negatively regulating the cell proliferation during leaf, stem, and flower development. Critical regulator of the endocycle. The sequence is that of Retinoblastoma-related protein 1 (RBR1) from Nicotiana benthamiana.